Consider the following 734-residue polypeptide: Photosystem I P700 chlorophyll a apoprotein A2 (734 aa).

A run of 8 helical transmembrane segments spans residues Ile-46–Ala-69, Leu-135–Gln-158, Leu-175–Ile-199, Ile-273–Tyr-291, Leu-330–Tyr-353, Ala-369–Ile-395, Ala-417–His-439, and Phe-517–Val-535. 2 residues coordinate [4Fe-4S] cluster: Cys-559 and Cys-568. The next 2 membrane-spanning stretches (helical) occupy residues Ala-575–Trp-596 and Leu-643–Ile-665. Chlorophyll a contacts are provided by His-654, Met-662, and Tyr-670. Trp-671 contacts phylloquinone. A helical membrane pass occupies residues Leu-707–Ala-727.

It belongs to the PsaA/PsaB family. As to quaternary structure, the PsaA/B heterodimer binds the P700 chlorophyll special pair and subsequent electron acceptors. PSI consists of a core antenna complex that captures photons, and an electron transfer chain that converts photonic excitation into a charge separation. The eukaryotic PSI reaction center is composed of at least 11 subunits. P700 is a chlorophyll a/chlorophyll a' dimer, A0 is one or more chlorophyll a, A1 is one or both phylloquinones and FX is a shared 4Fe-4S iron-sulfur center. serves as cofactor.

It localises to the plastid. Its subcellular location is the chloroplast thylakoid membrane. The enzyme catalyses reduced [plastocyanin] + hnu + oxidized [2Fe-2S]-[ferredoxin] = oxidized [plastocyanin] + reduced [2Fe-2S]-[ferredoxin]. PsaA and PsaB bind P700, the primary electron donor of photosystem I (PSI), as well as the electron acceptors A0, A1 and FX. PSI is a plastocyanin-ferredoxin oxidoreductase, converting photonic excitation into a charge separation, which transfers an electron from the donor P700 chlorophyll pair to the spectroscopically characterized acceptors A0, A1, FX, FA and FB in turn. Oxidized P700 is reduced on the lumenal side of the thylakoid membrane by plastocyanin. The polypeptide is Photosystem I P700 chlorophyll a apoprotein A2 (Jasminum nudiflorum (Winter jasmine)).